A 130-amino-acid chain; its full sequence is Small ribosomal subunit protein uS11 (130 aa).

It belongs to the universal ribosomal protein uS11 family. In terms of assembly, part of the 30S ribosomal subunit. Interacts with proteins S7 and S18. Binds to IF-3.

In terms of biological role, located on the platform of the 30S subunit, it bridges several disparate RNA helices of the 16S rRNA. Forms part of the Shine-Dalgarno cleft in the 70S ribosome. This is Small ribosomal subunit protein uS11 from Xylella fastidiosa (strain M12).